Reading from the N-terminus, the 398-residue chain is Acetate kinase 1 (398 aa).

Asn-9 provides a ligand contact to Mg(2+). Lys-16 is a binding site for ATP. A substrate-binding site is contributed by Arg-89. The active-site Proton donor/acceptor is the Asp-146. Residues 206–210 (HLGNG), 281–283 (DCR), and 329–333 (GIGEN) each bind ATP. Glu-384 is a Mg(2+) binding site.

The protein belongs to the acetokinase family. Homodimer. It depends on Mg(2+) as a cofactor. Mn(2+) is required as a cofactor.

Its subcellular location is the cytoplasm. It carries out the reaction acetate + ATP = acetyl phosphate + ADP. Its pathway is metabolic intermediate biosynthesis; acetyl-CoA biosynthesis; acetyl-CoA from acetate: step 1/2. In terms of biological role, catalyzes the formation of acetyl phosphate from acetate and ATP. Can also catalyze the reverse reaction. The chain is Acetate kinase 1 from Aliivibrio fischeri (strain ATCC 700601 / ES114) (Vibrio fischeri).